A 266-amino-acid polypeptide reads, in one-letter code: Dihydropteroate synthase (266 aa).

Residues 12–260 form the Pterin-binding domain; that stretch reads AAIMGILNVT…DVKANQEIVA (249 aa). N19 is a binding site for Mg(2+). Residues T59, D93, N112, D176, K212, and 248–250 contribute to the (7,8-dihydropterin-6-yl)methyl diphosphate site; that span reads RVH.

It belongs to the DHPS family. In terms of assembly, homodimer or homotrimer. Mg(2+) is required as a cofactor.

The catalysed reaction is (7,8-dihydropterin-6-yl)methyl diphosphate + 4-aminobenzoate = 7,8-dihydropteroate + diphosphate. It functions in the pathway cofactor biosynthesis; tetrahydrofolate biosynthesis; 7,8-dihydrofolate from 2-amino-4-hydroxy-6-hydroxymethyl-7,8-dihydropteridine diphosphate and 4-aminobenzoate: step 1/2. In terms of biological role, catalyzes the condensation of para-aminobenzoate (pABA) with 6-hydroxymethyl-7,8-dihydropterin diphosphate (DHPt-PP) to form 7,8-dihydropteroate (H2Pte), the immediate precursor of folate derivatives. The chain is Dihydropteroate synthase (folP) from Streptococcus pyogenes.